The following is a 203-amino-acid chain: Dephospho-CoA kinase (203 aa).

The DPCK domain occupies 3 to 201 (SVGLTGGIGS…QRYLGYAAAA (199 aa)). 11–16 (GSGKTT) contacts ATP.

This sequence belongs to the CoaE family.

It is found in the cytoplasm. It carries out the reaction 3'-dephospho-CoA + ATP = ADP + CoA + H(+). The protein operates within cofactor biosynthesis; coenzyme A biosynthesis; CoA from (R)-pantothenate: step 5/5. Functionally, catalyzes the phosphorylation of the 3'-hydroxyl group of dephosphocoenzyme A to form coenzyme A. This Burkholderia thailandensis (strain ATCC 700388 / DSM 13276 / CCUG 48851 / CIP 106301 / E264) protein is Dephospho-CoA kinase.